The following is a 457-amino-acid chain: MGSRFLLVLLSGASCPPCPKYASCHNSTHCTCEDGFRARSGRTYFHDSSEKCEDINECETGLAKCKYKAYCRNKVGGYICSCLVKYTLFNFLAGIIDYDHPDCYENNSQGTTQSNVDIWVSGVKPGFGKQLPGDKRTKHICVYWEGSEGGWSTEGCSHVHSNGSYTKCKCFHLSSFAVLVALAPKEDPVLTVITQVGLTISLLCLFLAILTFLLCRPIQNTSTSLHLELSLCLFLAHLLFLTGINRTEPEVLCSIIAGLLHFLYLACFTWMLLEGLHLFLTVRNLKVANYTSTGRFKKRFMYPVGYGIPAVIIAVSAIVGPQNYGTFTCWLKLDKGFIWSFMGPVAVIILINLVFYFQVLWILRSKLSSLNKEVSTIQDTRVMTFKAISQLFILGCSWGLGFFMVEEVGKTIGSIIAYSFTIINTLQGVLLFVVHCLLNRQVRLIILSVISLVPKSN.

Residues 1 to 14 (MGSRFLLVLLSGAS) form the signal peptide. Intrachain disulfides connect Cys-15–Cys-24, Cys-18–Cys-30, Cys-32–Cys-52, Cys-58–Cys-71, Cys-65–Cys-80, and Cys-82–Cys-103. One can recognise an EGF-like 1 domain in the interval 15–53 (CPPCPKYASCHNSTHCTCEDGFRARSGRTYFHDSSEKCE). Over 16–191 (PPCPKYASCH…LAPKEDPVLT (176 aa)) the chain is Extracellular. Residue Asn-26 is glycosylated (N-linked (GlcNAc...) asparagine). Residues 54-104 (DINECETGLAKCKYKAYCRNKVGGYICSCLVKYTLFNFLAGIIDYDHPDCY) form the EGF-like 2; calcium-binding domain. 2 N-linked (GlcNAc...) asparagine glycosylation sites follow: Asn-106 and Asn-162. The region spanning 134-186 (DKRTKHICVYWEGSEGGWSTEGCSHVHSNGSYTKCKCFHLSSFAVLVALAPKE) is the GAIN-B domain. Intrachain disulfides connect Cys-141–Cys-168 and Cys-156–Cys-170. The GPS stretch occupies residues 141-186 (CVYWEGSEGGWSTEGCSHVHSNGSYTKCKCFHLSSFAVLVALAPKE). A helical membrane pass occupies residues 192-212 (VITQVGLTISLLCLFLAILTF). Residues 213-223 (LLCRPIQNTST) are Cytoplasmic-facing. A helical transmembrane segment spans residues 224 to 244 (SLHLELSLCLFLAHLLFLTGI). Residue Asn-245 is glycosylated (N-linked (GlcNAc...) asparagine). Over 245-250 (NRTEPE) the chain is Extracellular. The helical transmembrane segment at 251-271 (VLCSIIAGLLHFLYLACFTWM) threads the bilayer. Over 272 to 299 (LLEGLHLFLTVRNLKVANYTSTGRFKKR) the chain is Cytoplasmic. The helical transmembrane segment at 300–320 (FMYPVGYGIPAVIIAVSAIVG) threads the bilayer. The Extracellular portion of the chain corresponds to 321–336 (PQNYGTFTCWLKLDKG). The chain crosses the membrane as a helical span at residues 337 to 357 (FIWSFMGPVAVIILINLVFYF). The Cytoplasmic segment spans residues 358–384 (QVLWILRSKLSSLNKEVSTIQDTRVMT). A helical transmembrane segment spans residues 385 to 405 (FKAISQLFILGCSWGLGFFMV). The Extracellular segment spans residues 406–413 (EEVGKTIG). A helical transmembrane segment spans residues 414-434 (SIIAYSFTIINTLQGVLLFVV). Over 435–457 (HCLLNRQVRLIILSVISLVPKSN) the chain is Cytoplasmic.

Belongs to the G-protein coupled receptor 2 family. Adhesion G-protein coupled receptor (ADGR) subfamily. In terms of assembly, forms a heterodimer, consisting of a large extracellular region (alpha subunit) non-covalently linked to a seven-transmembrane moiety (beta subunit). Glycosylated. In terms of processing, proteolytically cleaved into 2 subunits, an extracellular alpha subunit and a seven-transmembrane subunit.

The protein localises to the cell membrane. The protein resides in the secreted. Its function is as follows. May mediate the cellular interaction between myeloid cells and B-cells. This is Putative adhesion G protein-coupled receptor E4P from Homo sapiens (Human).